A 419-amino-acid polypeptide reads, in one-letter code: Divergent protein kinase domain 1C (419 aa).

Topologically, residues 1-22 (MARAAGARGPAGWCRRRGRCGR) are cytoplasmic. Positions 16–17 (RR) match the May mediate ER retention motif. A helical transmembrane segment spans residues 23-43 (GTLLAFAAWTAGWVLAAALLL). At 44–419 (RAHPGVLSER…TLRELQEAEK (376 aa)) the chain is on the lumenal side.

This sequence belongs to the DIPK family. Among the many cysteines in the lumenal domain, most are probably involved in disulfide bonds.

Its subcellular location is the endoplasmic reticulum membrane. The sequence is that of Divergent protein kinase domain 1C from Homo sapiens (Human).